The sequence spans 658 residues: MRFAIPLGAACAWAGVALAALQIAEDFSSITLNNDRFKAVWSKSKGSVVDMFLDGQDLLGPQSGSTGIGPYLDCYCVPSGFYTAGATNPRMQYVEGTDSTGTKYAGVILNDTYTPTGQQFQQYWFLRDGETGLHMFSRLAYYNETTPFLRNLQEFRTLFRPNTQLWTHLTSSELQTAPLPSKNAVSKQVVVQDATWRFNNTPDDAYYTQFSEYFTKYTFSNQWRDNDVHGLYGDGTNSNGSTYGAWLVMNTKGPLHSDLTVDGIVYNYIVSNHHGEGTPNITNGFDRTFGPQFYLFNGGKGSTSSLQDLRSEAAKLADPSWNAEFYDSIAKHVVGYVPSSKRGSVDGRIKLPKGASNPIAILTVDGQYFQDNSVVPSSYQYWTDIDTSGRFRIDRVVEGKYRLTVYADGIFGDFVRDGVTVRAGKTTTVKEKWDAESAGKEIWRLGTPDKSSGEFRHGVARDPTHPLHPPEYLIYWGAYDWQSDFPKGIDYTIGSSDPATDFNTVHWSVFGPTPDNPNVEYNTTHDWKINFSLTKKQLRNSKKATLTIQLAGAKTASGNTDEYKASEPYINLIHESYINDQKEPLSFVIGFNQSSSCIVRSAVSCYQVRSRMEFPADWLKVGENTLTLHLPYNATDTETAILPATVYVQYDALRLELD.

The N-terminal stretch at 1–19 is a signal peptide; the sequence is MRFAIPLGAACAWAGVALA. N-linked (GlcNAc...) asparagine glycans are attached at residues N110, N143, N239, N280, N522, N530, N592, and N633.

The protein belongs to the polysaccharide lyase 4 family.

It localises to the secreted. It carries out the reaction Endotype eliminative cleavage of L-alpha-rhamnopyranosyl-(1-&gt;4)-alpha-D-galactopyranosyluronic acid bonds of rhamnogalacturonan I domains in ramified hairy regions of pectin leaving L-rhamnopyranose at the reducing end and 4-deoxy-4,5-unsaturated D-galactopyranosyluronic acid at the non-reducing end.. Pectinolytic enzymes consist of four classes of enzymes: pectin lyase, polygalacturonase, pectin methylesterase and rhamnogalacturonase. Degrades the rhamnogalacturonan I (RG-I) backbone of pectin. This is Probable rhamnogalacturonate lyase B (rglB) from Aspergillus fumigatus (strain CBS 144.89 / FGSC A1163 / CEA10) (Neosartorya fumigata).